Consider the following 763-residue polypeptide: Putative pentatricopeptide repeat-containing protein At1g74580 (763 aa).

PPR repeat units follow at residues 39 to 69, 75 to 109, 110 to 144, 145 to 179, 180 to 214, 215 to 249, 250 to 284, 285 to 319, 320 to 354, 355 to 389, 390 to 424, 425 to 459, 460 to 494, 495 to 529, 530 to 564, 565 to 595, 601 to 635, 636 to 670, and 671 to 705; these read TLSTYRSVIEKLGYYGKFEAMEEVLVDMREN, LEGVYVGAMKNYGRKGKVQEAVNVFERMDFYDCEP, TVFSYNAIMSVLVDSGYFDQAHKVYMRMRDRGITP, DVYSFTIRMKSFCKTSRPHAALRLLNNMSSQGCEM, NVVAYCTVVGGFYEENFKAEGYELFGKMLASGVSL, CLSTFNKLLRVLCKKGDVKECEKLLDKVIKRGVLP, NLFTYNLFIQGLCQRGELDGAVRMVGCLIEQGPKP, DVITYNNLIYGLCKNSKFQEAEVYLGKMVNEGLEP, DSYTYNTLIAGYCKGGMVQLAERIVGDAVFNGFVP, DQFTYRSLIDGLCHEGETNRALALFNEALGKGIKP, NVILYNTLIKGLSNQGMILEAAQLANEMSEKGLIP, EVQTFNILVNGLCKMGCVSDADGLVKVMISKGYFP, DIFTFNILIHGYSTQLKMENALEILDVMLDNGVDP, DVYTYNSLLNGLCKTSKFEDVMETYKTMVEKGCAP, NLFTFNILLESLCRYRKLDEALGLLEEMKNKSVNP, DAVTFGTLIDGFCKNGDLDGAYTLFRKMEEA, STPTYNIIIHAFTEKLNVTMAEKLFQEMVDRCLGP, DGYTYRLMVDGFCKTGNVNLGYKFLLEMMENGFIP, and SLTTLGRVINCLCVEDRVYEAAGIIHRMVQKGLVP.

It belongs to the PPR family. P subfamily.

In Arabidopsis thaliana (Mouse-ear cress), this protein is Putative pentatricopeptide repeat-containing protein At1g74580.